The sequence spans 199 residues: NAD(P)H dehydrogenase (quinone) (199 aa).

The Flavodoxin-like domain occupies 4 to 190 (VLVLYYSSYG…EGARHQGELV (187 aa)). FMN is bound by residues 10-15 (SSYGHI) and 78-80 (TRY). Tyr-12 contributes to the NAD(+) binding site. Substrate is bound at residue Trp-98. Residues 113 to 119 (STATQHG) and His-134 contribute to the FMN site.

This sequence belongs to the WrbA family. FMN is required as a cofactor.

It carries out the reaction a quinone + NADH + H(+) = a quinol + NAD(+). It catalyses the reaction a quinone + NADPH + H(+) = a quinol + NADP(+). This chain is NAD(P)H dehydrogenase (quinone), found in Paraburkholderia phymatum (strain DSM 17167 / CIP 108236 / LMG 21445 / STM815) (Burkholderia phymatum).